Consider the following 189-residue polypeptide: Elongation factor P (189 aa).

An N6-(3,6-diaminohexanoyl)-5-hydroxylysine modification is found at Lys-34.

Belongs to the elongation factor P family. In terms of processing, may be beta-lysylated on the epsilon-amino group of Lys-34 by the combined action of EpmA and EpmB, and then hydroxylated on the C5 position of the same residue by EpmC (if this protein is present). Lysylation is critical for the stimulatory effect of EF-P on peptide-bond formation. The lysylation moiety may extend toward the peptidyltransferase center and stabilize the terminal 3-CCA end of the tRNA. Hydroxylation of the C5 position on Lys-34 may allow additional potential stabilizing hydrogen-bond interactions with the P-tRNA.

The protein resides in the cytoplasm. Its pathway is protein biosynthesis; polypeptide chain elongation. Functionally, involved in peptide bond synthesis. Alleviates ribosome stalling that occurs when 3 or more consecutive Pro residues or the sequence PPG is present in a protein, possibly by augmenting the peptidyl transferase activity of the ribosome. Modification of Lys-34 is required for alleviation. This is Elongation factor P from Legionella pneumophila (strain Paris).